Here is a 57-residue protein sequence, read N- to C-terminus: RPRFCELAPSAGSCFGFVSSYYYNRYSNTCHSFTYSGCGKNANRFRTIDECNRTCVV.

Residues 5 to 55 (CELAPSAGSCFGFVSSYYYNRYSNTCHSFTYSGCGKNANRFRTIDECNRTC) enclose the BPTI/Kunitz inhibitor domain. Intrachain disulfides connect cysteine 5-cysteine 55, cysteine 14-cysteine 38, and cysteine 30-cysteine 51.

Belongs to the venom Kunitz-type family. Expressed by the venom gland.

The protein localises to the secreted. Its function is as follows. Serine protease inhibitor that inhibits chymotrypsin. Also interacts with vasopressin V2 receptor (V2R/AVPR2). Inhibits vasopressin binding human V2R in the nanomolar range (Ki=7.87 nM), and also moderately inhibits vasopressin-induced cAMP production (IC(50)=208 nM). In vivo, intraperitoneal injection of this protein into rats increases diuresis by 1.6-fold, without any loss of electrolytes. The chain is Kunitz-type serine protease inhibitor from Naja naja (Indian cobra).